Reading from the N-terminus, the 105-residue chain is Cytochrome c-553-like (105 aa).

The first 29 residues, 1-29, serve as a signal peptide directing secretion; the sequence is MAGIVSLVILAVALFSFMNFDPYVSQVLA. Residues Cys-45, Cys-48, His-49, and Met-85 each contribute to the heme c site.

Binds 1 heme c group covalently per subunit.

This Synechocystis sp. (strain ATCC 27184 / PCC 6803 / Kazusa) protein is Cytochrome c-553-like (cytM).